A 414-amino-acid chain; its full sequence is Probable indole-3-pyruvate monooxygenase YUCCA1 (414 aa).

25–30 (GAGPSG) lines the FAD pocket. 189–194 (GCGNSG) contributes to the NADP(+) binding site.

The protein belongs to the FMO family. Requires FAD as cofactor. In terms of tissue distribution, expressed in the apical meristems and young floral primordia. Detected in the floral meristems and at the base of the floral organs.

It catalyses the reaction indole-3-pyruvate + NADPH + O2 + H(+) = (indol-3-yl)acetate + CO2 + NADP(+) + H2O. Its pathway is plant hormone metabolism; auxin biosynthesis. Functionally, involved in auxin biosynthesis, but not in the tryptamine or the CYP79B2/B3 branches. Catalyzes in vitro the N-oxidation of tryptamine to form N-hydroxyl tryptamine. Involved during embryogenesis and seedling development. Required for the formation of floral organs and vascular tissues. Belongs to the set of redundant YUCCA genes probably responsible for auxin biosynthesis in shoots. The protein is Probable indole-3-pyruvate monooxygenase YUCCA1 (YUC1) of Arabidopsis thaliana (Mouse-ear cress).